The primary structure comprises 219 residues: EP300-interacting inhibitor of differentiation 2 (219 aa).

Positions 1–71 (MSELPADQGV…PVPEAREGPM (71 aa)) are disordered. The segment covering 20–34 (GDVRQAEVGGRRREP) has biased composition (basic and acidic residues). R75 is subject to Omega-N-methylarginine. The tract at residues 95 to 115 (AEPAEEEGPEGRPRSRPGNGP) is disordered.

Heterodimer with EID2B. Interacts with the C-terminus of EP300. Interacts with HDAC1 and HDAC2. Interacts with SMAD2, SMAD4 and with the MH2 domain of SMAD3.

The protein localises to the nucleus. In terms of biological role, interacts with EP300 and acts as a repressor of MYOD-dependent transcription and muscle differentiation. Inhibits EP300 histone acetyltransferase activity. Acts as a repressor of TGFB/SMAD transcriptional responses. May act as a repressor of the TGFB/SMAD3-dependent signaling by selectively blocking formation of TGFB-induced SMAD3-SMAD4 complex. The protein is EP300-interacting inhibitor of differentiation 2 of Bos taurus (Bovine).